Here is a 282-residue protein sequence, read N- to C-terminus: Virginiamycin B lyase (282 aa).

Histidine 217 is a substrate binding site. Glutamate 256 is a Mg(2+) binding site. Histidine 258 (proton acceptor) is an active-site residue. Glutamate 273 is a binding site for Mg(2+).

The protein belongs to the Vgb family. Monomer. It depends on Mg(2+) as a cofactor.

Functionally, inactivates the type B streptogramin antibiotics by linearizing the lactone ring at the ester linkage, generating a free phenylglycine carboxylate and converting the threonyl moiety into 2-amino-butenoic acid. The polypeptide is Virginiamycin B lyase (Mycolicibacterium smegmatis (strain ATCC 700084 / mc(2)155) (Mycobacterium smegmatis)).